The sequence spans 378 residues: Queuine tRNA-ribosyltransferase (378 aa).

Asp-89 acts as the Proton acceptor in catalysis. Residues Asp-89–Phe-93, Asp-143, Gln-194, and Gly-221 contribute to the substrate site. Positions Gly-252–Asn-258 are RNA binding. Asp-271 functions as the Nucleophile in the catalytic mechanism. The RNA binding; important for wobble base 34 recognition stretch occupies residues Ala-276–Arg-280. Cys-309, Cys-311, Cys-314, and His-340 together coordinate Zn(2+).

It belongs to the queuine tRNA-ribosyltransferase family. As to quaternary structure, homodimer. Within each dimer, one monomer is responsible for RNA recognition and catalysis, while the other monomer binds to the replacement base PreQ1. It depends on Zn(2+) as a cofactor.

It carries out the reaction 7-aminomethyl-7-carbaguanine + guanosine(34) in tRNA = 7-aminomethyl-7-carbaguanosine(34) in tRNA + guanine. It participates in tRNA modification; tRNA-queuosine biosynthesis. Catalyzes the base-exchange of a guanine (G) residue with the queuine precursor 7-aminomethyl-7-deazaguanine (PreQ1) at position 34 (anticodon wobble position) in tRNAs with GU(N) anticodons (tRNA-Asp, -Asn, -His and -Tyr). Catalysis occurs through a double-displacement mechanism. The nucleophile active site attacks the C1' of nucleotide 34 to detach the guanine base from the RNA, forming a covalent enzyme-RNA intermediate. The proton acceptor active site deprotonates the incoming PreQ1, allowing a nucleophilic attack on the C1' of the ribose to form the product. After dissociation, two additional enzymatic reactions on the tRNA convert PreQ1 to queuine (Q), resulting in the hypermodified nucleoside queuosine (7-(((4,5-cis-dihydroxy-2-cyclopenten-1-yl)amino)methyl)-7-deazaguanosine). The protein is Queuine tRNA-ribosyltransferase of Lachnoclostridium phytofermentans (strain ATCC 700394 / DSM 18823 / ISDg) (Clostridium phytofermentans).